Reading from the N-terminus, the 348-residue chain is Beta-hexosaminidase (348 aa).

Residues aspartate 62, arginine 70, arginine 134, and 164-165 (KH) contribute to the substrate site. Residue histidine 177 is the Proton donor/acceptor of the active site. The active-site Nucleophile is aspartate 249.

The protein belongs to the glycosyl hydrolase 3 family. NagZ subfamily.

It is found in the cytoplasm. It catalyses the reaction Hydrolysis of terminal non-reducing N-acetyl-D-hexosamine residues in N-acetyl-beta-D-hexosaminides.. It participates in cell wall biogenesis; peptidoglycan recycling. In terms of biological role, plays a role in peptidoglycan recycling by cleaving the terminal beta-1,4-linked N-acetylglucosamine (GlcNAc) from peptide-linked peptidoglycan fragments, giving rise to free GlcNAc, anhydro-N-acetylmuramic acid and anhydro-N-acetylmuramic acid-linked peptides. This Histophilus somni (strain 2336) (Haemophilus somnus) protein is Beta-hexosaminidase.